We begin with the raw amino-acid sequence, 195 residues long: Ras-related protein rac-2 (195 aa).

Residue 10–17 (GDGAVGKT) coordinates GTP. The short motif at 32–40 (YILTVFDTY) is the Effector region element. Residues 57–61 (DTAGQ) and 115–118 (TKAD) each bind GTP. The tract at residues 176-195 (GLTPPQTPQTRAKKSNCTVL) is disordered. The residue at position 192 (cysteine 192) is a Cysteine methyl ester. Residue cysteine 192 is the site of S-geranylgeranyl cysteine attachment. A propeptide spans 193-195 (TVL) (removed in mature form).

The protein belongs to the small GTPase superfamily. Rho family.

It localises to the cell membrane. Functionally, during gonad morphogenesis, plays a role in distal tip cell (DTC)-mediated guidance of gonad elongation. This is Ras-related protein rac-2 (rac-2) from Caenorhabditis elegans.